The chain runs to 215 residues: Vesicle-trafficking protein SEC22b-B (215 aa).

Residues 1–190 are Cytoplasmic-facing; it reads MVLLTMIARL…RSDAKYLNTR (190 aa). One can recognise a Longin domain in the interval 6–119; it reads MIARLADGLP…YSFIEFDTYI (114 aa). A v-SNARE coiled-coil homology domain is found at 134–194; that stretch reads NLSNINTELQ…KYLNTRSTYA (61 aa). Residues 191–213 form a helical membrane-spanning segment; sequence STYAKLAAGGVFFIMLIVYIRFW. At 214–215 the chain is on the lumenal side; sequence WL.

This sequence belongs to the synaptobrevin family. As to quaternary structure, component of 2 distinct SNARE complexes.

It localises to the endoplasmic reticulum membrane. The protein resides in the endoplasmic reticulum-Golgi intermediate compartment membrane. Its subcellular location is the golgi apparatus. It is found in the cis-Golgi network membrane. The protein localises to the trans-Golgi network membrane. It localises to the melanosome. In terms of biological role, SNARE involved in targeting and fusion of ER-derived transport vesicles with the Golgi complex as well as Golgi-derived retrograde transport vesicles with the ER. The polypeptide is Vesicle-trafficking protein SEC22b-B (Danio rerio (Zebrafish)).